We begin with the raw amino-acid sequence, 562 residues long: Malate synthase (562 aa).

Arginine 177 acts as the Proton acceptor in catalysis. The active-site Proton donor is the aspartate 463. Residues 560–562 (SRL) carry the Microbody targeting signal motif.

Belongs to the malate synthase family.

It localises to the glyoxysome. The enzyme catalyses glyoxylate + acetyl-CoA + H2O = (S)-malate + CoA + H(+). Its pathway is carbohydrate metabolism; glyoxylate cycle; (S)-malate from isocitrate: step 2/2. Its function is as follows. Does not seem to be essential for lipid utilization and gluconeogenesis in seedlings. The sequence is that of Malate synthase from Arabidopsis thaliana (Mouse-ear cress).